The chain runs to 251 residues: Fibroblast growth factor-binding protein 1 (251 aa).

The signal sequence occupies residues 1–20 (MRLHSLILLSFLLLATQAFS). Positions 25-62 (KRAKNAPHSTAEEGVEGSAPSLGKAQNKQRSRTSKSLT) are disordered. Intrachain disulfides connect Cys-74-Cys-91, Cys-100-Cys-133, and Cys-109-Cys-145. The disordered stretch occupies residues 160 to 189 (NARGNTKPRKEKAEVSAREHNKVQEAVSTE). The segment covering 170 to 182 (EKAEVSAREHNKV) has biased composition (basic and acidic residues). An O-linked (GalNAc...) serine glycan is attached at Ser-175. Residues 210-251 (RDPECLEDPDVLNQRKTALEFCGESWSSICTFFLNMLQATSC) are sufficient for interaction with FGF2 and FGF2-induced effects. 2 disulfide bridges follow: Cys-214-Cys-251 and Cys-231-Cys-239.

The protein belongs to the fibroblast growth factor-binding protein family. As to quaternary structure, found in a complex with FGFBP1, FGF1 and FGF2. Interacts with FGF1, FGF7, FGF10, FGF22 and HSPG2. Interacts with FGF2. Expressed in intestine, ovary, lung, placenta and normal and wounded skin.

Its subcellular location is the secreted. It is found in the extracellular space. It localises to the cell membrane. Its function is as follows. Acts as a carrier protein that releases fibroblast-binding factors (FGFs) from the extracellular matrix (EM) storage and thus enhances the mitogenic activity of FGFs. Enhances FGF2 signaling during tissue repair, angiogenesis and in tumor growth. This chain is Fibroblast growth factor-binding protein 1 (Fgfbp1), found in Mus musculus (Mouse).